The chain runs to 210 residues: LexA repressor (210 aa).

Residues 29 to 49 constitute a DNA-binding region (H-T-H motif); it reads VREIGEAVDLSSTSTVHGHIS. Residues Ser-130 and Lys-168 each act as for autocatalytic cleavage activity in the active site.

The protein belongs to the peptidase S24 family. As to quaternary structure, homodimer.

It catalyses the reaction Hydrolysis of Ala-|-Gly bond in repressor LexA.. Functionally, represses a number of genes involved in the response to DNA damage (SOS response), including recA and lexA. In the presence of single-stranded DNA, RecA interacts with LexA causing an autocatalytic cleavage which disrupts the DNA-binding part of LexA, leading to derepression of the SOS regulon and eventually DNA repair. In Lactiplantibacillus plantarum (strain ATCC BAA-793 / NCIMB 8826 / WCFS1) (Lactobacillus plantarum), this protein is LexA repressor.